We begin with the raw amino-acid sequence, 451 residues long: Nicotinamide phosphoribosyltransferase (451 aa).

R209 contributes to the diphosphate binding site. Position 232 (D232) interacts with beta-nicotinamide D-ribonucleotide. Positions 248 and 309 each coordinate diphosphate. Residues 309–311, 364–365, and R403 contribute to the beta-nicotinamide D-ribonucleotide site; these read RPD and GD.

Belongs to the NAPRTase family.

It carries out the reaction beta-nicotinamide D-ribonucleotide + diphosphate = 5-phospho-alpha-D-ribose 1-diphosphate + nicotinamide + H(+). The protein operates within cofactor biosynthesis; NAD(+) biosynthesis; nicotinamide D-ribonucleotide from 5-phospho-alpha-D-ribose 1-diphosphate and nicotinamide: step 1/1. Catalyzes the condensation of nicotinamide with 5-phosphoribosyl-1-pyrophosphate to yield nicotinamide mononucleotide, an intermediate in the biosynthesis of NAD. The sequence is that of Nicotinamide phosphoribosyltransferase from Mycoplasma pneumoniae (strain ATCC 29342 / M129 / Subtype 1) (Mycoplasmoides pneumoniae).